We begin with the raw amino-acid sequence, 377 residues long: Queuine tRNA-ribosyltransferase (377 aa).

Residue Asp89 is the Proton acceptor of the active site. Substrate contacts are provided by residues 89-93 (DSGGF), Asp143, Gln187, and Gly214. The interval 245–251 (GVGKPED) is RNA binding. The Nucleophile role is filled by Asp264. The interval 269–273 (TRNAR) is RNA binding; important for wobble base 34 recognition. 4 residues coordinate Zn(2+): Cys302, Cys304, Cys307, and His333.

It belongs to the queuine tRNA-ribosyltransferase family. Homodimer. Within each dimer, one monomer is responsible for RNA recognition and catalysis, while the other monomer binds to the replacement base PreQ1. It depends on Zn(2+) as a cofactor.

It carries out the reaction 7-aminomethyl-7-carbaguanine + guanosine(34) in tRNA = 7-aminomethyl-7-carbaguanosine(34) in tRNA + guanine. It participates in tRNA modification; tRNA-queuosine biosynthesis. Its function is as follows. Catalyzes the base-exchange of a guanine (G) residue with the queuine precursor 7-aminomethyl-7-deazaguanine (PreQ1) at position 34 (anticodon wobble position) in tRNAs with GU(N) anticodons (tRNA-Asp, -Asn, -His and -Tyr). Catalysis occurs through a double-displacement mechanism. The nucleophile active site attacks the C1' of nucleotide 34 to detach the guanine base from the RNA, forming a covalent enzyme-RNA intermediate. The proton acceptor active site deprotonates the incoming PreQ1, allowing a nucleophilic attack on the C1' of the ribose to form the product. After dissociation, two additional enzymatic reactions on the tRNA convert PreQ1 to queuine (Q), resulting in the hypermodified nucleoside queuosine (7-(((4,5-cis-dihydroxy-2-cyclopenten-1-yl)amino)methyl)-7-deazaguanosine). The protein is Queuine tRNA-ribosyltransferase of Shewanella piezotolerans (strain WP3 / JCM 13877).